A 382-amino-acid polypeptide reads, in one-letter code: DNA double-strand break repair protein Mre11 (382 aa).

The Mn(2+) site is built by Asp-8, His-10, Asp-49, and Asp-84. Catalysis depends on His-85, which acts as the Proton donor. Mn(2+) contacts are provided by His-156, His-187, and His-189.

The protein belongs to the MRE11/RAD32 family. Homodimer. Forms a heterotetramer composed of two Mre11 subunits and two Rad50 subunits. Interacts with Rad50 and HerA. Mn(2+) serves as cofactor.

Nuclease activity is regulated by Rad50. Part of the Rad50/Mre11 complex, which is involved in the early steps of DNA double-strand break (DSB) repair. The complex may facilitate opening of the processed DNA ends to aid in the recruitment of HerA and NurA. Mre11 binds to DSB ends and has both double-stranded 3'-5' exonuclease activity and single-stranded endonuclease activity. Recruited immediately to chromosomal DNA after gamma irradiation, and remains DNA bound in the course of DNA repair. The protein is DNA double-strand break repair protein Mre11 of Sulfolobus acidocaldarius (strain ATCC 33909 / DSM 639 / JCM 8929 / NBRC 15157 / NCIMB 11770).